Consider the following 625-residue polypeptide: Basic helix-loop-helix ARNT-like protein 1 (625 aa).

Residues 1–60 (MADQRMDISSTISDFMSPGPTDLLSSSLGTSGVDCNRKRKGSSTDYQESMDTDKDDPHGR) form a disordered region. Ser17 is subject to Phosphoserine; by GSK3-beta. The segment covering 17 to 32 (SPGPTDLLSSSLGTSG) has biased composition (low complexity). Thr21 is subject to Phosphothreonine; by GSK3-beta. The Nuclear localization signal motif lies at 36–41 (NRKRKG). Residues 51 to 60 (DTDKDDPHGR) show a composition bias toward basic and acidic residues. The 54-residue stretch at 72–125 (NAREAHSQIEKRRRDKMNSFIDELASLVPTCNAMSRKLDKLTVLRMAVQHMKTL) folds into the bHLH domain. Position 78 is a phosphoserine (Ser78). At Ser90 the chain carries Phosphoserine; by CK2. The Nuclear export signal 1 signature appears at 142–152 (LSDDELKHLIL). A PAS 1 domain is found at 143 to 215 (SDDELKHLIL…EQLSSSDTAP (73 aa)). A Glycyl lysine isopeptide (Lys-Gly) (interchain with G-Cter in SUMO2 and SUMO3) cross-link involves residue Lys252. Lys259 participates in a covalent cross-link: Glycyl lysine isopeptide (Lys-Gly) (interchain with G-Cter in SUMO); alternate. Lys259 is covalently cross-linked (Glycyl lysine isopeptide (Lys-Gly) (interchain with G-Cter in SUMO2); alternate). A PAS 2 domain is found at 325 to 395 (PQPVNGEIRV…ECHRQVLQTR (71 aa)). The Nuclear export signal 2 motif lies at 360–368 (LAYLPQELL). The PAC domain occupies 400-443 (TNCYKFKIKDGSFITLRSRWFSFMNPWTKEVEYIVSTNTVVLAN). Disordered stretches follow at residues 454-491 (QLTASPRSMDSMLPSGEGGPKRTHPTVPGIPGGTRAGA) and 510-594 (GSSP…SPSN). The tract at residues 507–587 (RIRGSSPSSC…IGIDMIDNDQ (81 aa)) is interaction with CIART. Low complexity predominate over residues 510-520 (GSSPSSCGSSP). At Lys537 the chain carries N6-acetyllysine.

In terms of assembly, component of the circadian clock oscillator which includes the CRY1/2 proteins, CLOCK or NPAS2, BMAL1 or BMAL2, CSNK1D and/or CSNK1E, TIMELESS and the PER1/2/3 proteins. Forms a heterodimer with CLOCK. The CLOCK-BMAL1 heterodimer is required for E-box-dependent transactivation, for CLOCK nuclear translocation and degradation, and, for phosphorylation of both CLOCK and BMAL1. Part of a nuclear complex which also includes RACK1 and PRKCA; RACK1 and PRKCA are recruited to the complex in a circadian manner. Interacts with NPAS2. Interacts with EZH2. Interacts with SUMO3. Interacts with SIRT1. Interacts with AHR. Interacts with ID1, ID2 and ID3. Interacts with DDX4. Interacts with OGT. Interacts with EED and SUZ12. Interacts with MTA1. Interacts with CIART. Interacts with HSP90. Interacts with KAT2B and EP300. Interacts with BHLHE40/DEC1 and BHLHE41/DEC2. Interacts with RELB and the interaction is enhanced in the presence of CLOCK. Interacts with PER1, PER2, CRY1 and CRY2 and this interaction requires a translocation to the nucleus. Interaction of the CLOCK-BMAL1 heterodimer with PER or CRY inhibits transcription activation. Interaction of the CLOCK-BMAL1 with CRY1 is independent of DNA but with PER2 is off DNA. The CLOCK-BMAL1 heterodimer interacts with GSK3B. Interacts with KDM5A. Interacts with KMT2A; in a circadian manner. Interacts with UBE3A. Interacts with PRKCG. Interacts with MAGEL2. Interacts with NCOA2. Interacts with THRAP3. The CLOCK-BMAL1 heterodimer interacts with PASD1. Interacts with PASD1. Interacts with USP9X. Interacts with PIWIL2 (via PIWI domain). Interacts with HDAC3. Interacts with HNF4A. Post-translationally, ubiquitinated, leading to its proteasomal degradation. Deubiquitinated by USP9X. In terms of processing, O-glycosylated; contains O-GlcNAc. O-glycosylation by OGT prevents protein degradation by inhibiting ubiquitination. It also stabilizes the CLOCK-BMAL1 heterodimer thereby increasing CLOCK-BMAL1-mediated transcription of genes in the negative loop of the circadian clock such as PER1/2/3 and CRY1/2. Acetylated on Lys-537 by CLOCK during the repression phase of the circadian cycle. Acetylation facilitates recruitment of CRY1 protein and initiates the repression phase of the circadian cycle. Acetylated at Lys-537 by KAT5 during the activation phase of the cycle, leading to recruitment of the positive transcription elongation factor b (P-TEFb) and BRD4, followed by productive elongation of circadian transcripts. Deacetylated by SIRT1, which may result in decreased protein stability. Post-translationally, phosphorylated upon dimerization with CLOCK. Phosphorylation enhances the transcriptional activity, alters the subcellular localization and decreases the stability of the CLOCK-BMAL1 heterodimer by promoting its degradation. Phosphorylation shows circadian variations in the liver with a peak between CT10 to CT14. Phosphorylation at Ser-90 by CK2 is essential for its nuclear localization, its interaction with CLOCK and controls CLOCK nuclear entry. Dephosphorylation at Ser-78 is important for dimerization with CLOCK and transcriptional activity. In terms of processing, sumoylated on Lys-259 upon dimerization with CLOCK. Predominantly conjugated to poly-SUMO2/3 rather than SUMO1 and the level of these conjugates undergo rhythmic variation, peaking at CT9-CT12. Sumoylation localizes it exclusively to the PML body and promotes its ubiquitination in the PML body, ubiquitin-dependent proteasomal degradation and the transcriptional activity of the CLOCK-BMAL1 heterodimer. Undergoes lysosome-mediated degradation in a time-dependent manner in the liver.

The protein localises to the nucleus. Its subcellular location is the cytoplasm. It is found in the PML body. Transcriptional activator which forms a core component of the circadian clock. The circadian clock, an internal time-keeping system, regulates various physiological processes through the generation of approximately 24 hour circadian rhythms in gene expression, which are translated into rhythms in metabolism and behavior. It is derived from the Latin roots 'circa' (about) and 'diem' (day) and acts as an important regulator of a wide array of physiological functions including metabolism, sleep, body temperature, blood pressure, endocrine, immune, cardiovascular, and renal function. Consists of two major components: the central clock, residing in the suprachiasmatic nucleus (SCN) of the brain, and the peripheral clocks that are present in nearly every tissue and organ system. Both the central and peripheral clocks can be reset by environmental cues, also known as Zeitgebers (German for 'timegivers'). The predominant Zeitgeber for the central clock is light, which is sensed by retina and signals directly to the SCN. The central clock entrains the peripheral clocks through neuronal and hormonal signals, body temperature and feeding-related cues, aligning all clocks with the external light/dark cycle. Circadian rhythms allow an organism to achieve temporal homeostasis with its environment at the molecular level by regulating gene expression to create a peak of protein expression once every 24 hours to control when a particular physiological process is most active with respect to the solar day. Transcription and translation of core clock components (CLOCK, NPAS2, BMAL1, BMAL2, PER1, PER2, PER3, CRY1 and CRY2) plays a critical role in rhythm generation, whereas delays imposed by post-translational modifications (PTMs) are important for determining the period (tau) of the rhythms (tau refers to the period of a rhythm and is the length, in time, of one complete cycle). A diurnal rhythm is synchronized with the day/night cycle, while the ultradian and infradian rhythms have a period shorter and longer than 24 hours, respectively. Disruptions in the circadian rhythms contribute to the pathology of cardiovascular diseases, cancer, metabolic syndromes and aging. A transcription/translation feedback loop (TTFL) forms the core of the molecular circadian clock mechanism. Transcription factors, CLOCK or NPAS2 and BMAL1 or BMAL2, form the positive limb of the feedback loop, act in the form of a heterodimer and activate the transcription of core clock genes and clock-controlled genes (involved in key metabolic processes), harboring E-box elements (5'-CACGTG-3') within their promoters. The core clock genes: PER1/2/3 and CRY1/2 which are transcriptional repressors form the negative limb of the feedback loop and interact with the CLOCK|NPAS2-BMAL1|BMAL2 heterodimer inhibiting its activity and thereby negatively regulating their own expression. This heterodimer also activates nuclear receptors NR1D1/2 and RORA/B/G, which form a second feedback loop and which activate and repress BMAL1 transcription, respectively. BMAL1 positively regulates myogenesis and negatively regulates adipogenesis via the transcriptional control of the genes of the canonical Wnt signaling pathway. Plays a role in normal pancreatic beta-cell function; regulates glucose-stimulated insulin secretion via the regulation of antioxidant genes NFE2L2/NRF2 and its targets SESN2, PRDX3, CCLC and CCLM. Negatively regulates the mTORC1 signaling pathway; regulates the expression of MTOR and DEPTOR. Controls diurnal oscillations of Ly6C inflammatory monocytes; rhythmic recruitment of the PRC2 complex imparts diurnal variation to chemokine expression that is necessary to sustain Ly6C monocyte rhythms. Regulates the expression of HSD3B2, STAR, PTGS2, CYP11A1, CYP19A1 and LHCGR in the ovary and also the genes involved in hair growth. Plays an important role in adult hippocampal neurogenesis by regulating the timely entry of neural stem/progenitor cells (NSPCs) into the cell cycle and the number of cell divisions that take place prior to cell-cycle exit. Regulates the circadian expression of CIART and KLF11. The CLOCK-BMAL1 heterodimer regulates the circadian expression of SERPINE1/PAI1, VWF, B3, CCRN4L/NOC, NAMPT, DBP, MYOD1, PPARGC1A, PPARGC1B, SIRT1, GYS2, F7, NGFR, GNRHR, BHLHE40/DEC1, ATF4, MTA1, KLF10 and also genes implicated in glucose and lipid metabolism. Promotes rhythmic chromatin opening, regulating the DNA accessibility of other transcription factors. The NPAS2-BMAL1 heterodimer positively regulates the expression of MAOA, F7 and LDHA and modulates the circadian rhythm of daytime contrast sensitivity by regulating the rhythmic expression of adenylate cyclase type 1 (ADCY1) in the retina. The preferred binding motif for the CLOCK-BMAL1 heterodimer is 5'-CACGTGA-3', which contains a flanking adenine nucleotide at the 3-prime end of the canonical 6-nucleotide E-box sequence. CLOCK specifically binds to the half-site 5'-CAC-3', while BMAL1 binds to the half-site 5'-GTGA-3'. The CLOCK-BMAL1 heterodimer also recognizes the non-canonical E-box motifs 5'-AACGTGA-3' and 5'-CATGTGA-3'. Essential for the rhythmic interaction of CLOCK with ASS1 and plays a critical role in positively regulating CLOCK-mediated acetylation of ASS1. Plays a role in protecting against lethal sepsis by limiting the expression of immune checkpoint protein CD274 in macrophages in a PKM2-dependent manner. Regulates the diurnal rhythms of skeletal muscle metabolism via transcriptional activation of genes promoting triglyceride synthesis (DGAT2) and metabolic efficiency (COQ10B). The polypeptide is Basic helix-loop-helix ARNT-like protein 1 (BMAL1) (Pongo abelii (Sumatran orangutan)).